The primary structure comprises 125 residues: uncharacterized protein (125 aa).

This is an uncharacterized protein from Escherichia coli (Bacteriophage T4).